The sequence spans 147 residues: Ribosome-binding factor A (147 aa).

A disordered region spans residues 122-147; sequence QQQFGSVDDDVIENDIEESDDTEGKV. Residues 128 to 147 are compositionally biased toward acidic residues; the sequence is VDDDVIENDIEESDDTEGKV.

This sequence belongs to the RbfA family. As to quaternary structure, monomer. Binds 30S ribosomal subunits, but not 50S ribosomal subunits or 70S ribosomes.

It localises to the cytoplasm. Functionally, one of several proteins that assist in the late maturation steps of the functional core of the 30S ribosomal subunit. Associates with free 30S ribosomal subunits (but not with 30S subunits that are part of 70S ribosomes or polysomes). Required for efficient processing of 16S rRNA. May interact with the 5'-terminal helix region of 16S rRNA. The protein is Ribosome-binding factor A of Shewanella oneidensis (strain ATCC 700550 / JCM 31522 / CIP 106686 / LMG 19005 / NCIMB 14063 / MR-1).